Consider the following 62-residue polypeptide: Mu-elapitoxin-Na1a (62 aa).

Disulfide bonds link C3–C22, C15–C40, C44–C55, and C56–C61.

Belongs to the three-finger toxin family. Short-chain subfamily. Orphan group XV sub-subfamily. In terms of tissue distribution, expressed by the venom gland.

Its subcellular location is the secreted. Functionally, potent inhibitor of human Nav1.8/SCN10A (IC(50)=141-380 nM). Is highly selective for this channel and acts in a reversible manner. Shows a depolarizing shift of activation and hyperpolarizing shift of inactivation. In contrast to the very similar cytotoxin A5 (AC P62375), does not seem to bind integrin alpha-V/beta-3, since it does not promote or inhibit the proliferation of HUVECs and C-PAE cells. In vivo, in rodent models of inflammatory and neuropathic pain, it alleviates nociceptive behaviors more potently than does morphine. It displays no evident cytotoxic, hemolytic and cardiotoxic activities and produces no obvious adverse responses in mice even at a dose 30-fold higher than that producing a significant analgesic effect. This chain is Mu-elapitoxin-Na1a, found in Naja atra (Chinese cobra).